The sequence spans 691 residues: Amino-acid acetyltransferase, mitochondrial (691 aa).

Positions 1 to 27 are enriched in polar residues; the sequence is MSSTSLAWPRTAKSSLLQSADFSSTSK. 2 disordered regions span residues 1-29 and 65-95; these read MSSTSLAWPRTAKSSLLQSADFSSTSKGY and RLKAQHSPKPQVKEPEKESKDDAPQPLPSGV. Basic and acidic residues predominate over residues 75–87; it reads QVKEPEKESKDDA. The N-acetyltransferase domain occupies 512–681; the sequence is NRPRMSLDDP…YEAVCRSIQP (170 aa).

It belongs to the acetyltransferase family.

The protein localises to the mitochondrion. The enzyme catalyses L-glutamate + acetyl-CoA = N-acetyl-L-glutamate + CoA + H(+). Its pathway is amino-acid biosynthesis; L-arginine biosynthesis; N(2)-acetyl-L-ornithine from L-glutamate: step 1/4. In terms of biological role, N-acetylglutamate synthase involved in arginine biosynthesis. The chain is Amino-acid acetyltransferase, mitochondrial (arg2) from Aspergillus terreus (strain NIH 2624 / FGSC A1156).